A 158-amino-acid chain; its full sequence is Histone H2B.1 (158 aa).

N6-acetyllysine occurs at positions 7 and 25. 2 disordered regions span residues 26–45 and 135–158; these read AAAG…PKKG and VHNF…GQQT. Residues 135 to 144 show a composition bias toward basic and acidic residues; that stretch reads VHNFESETSK. Residues 147–158 are compositionally biased toward basic residues; it reads SQGRKRGRGQQT.

This sequence belongs to the histone H2B family. In terms of assembly, the nucleosome is a histone octamer containing two molecules each of H2A, H2B, H3 and H4 assembled in one H3-H4 heterotetramer and two H2A-H2B heterodimers. The octamer wraps approximately 147 bp of DNA. Can be acetylated to form H2BK6ac and H2BK33ac. In terms of tissue distribution, expressed in the generative cell within the bicellular pollen. Not detected in other reproductive or vegetative tissues.

The protein localises to the nucleus. It is found in the chromosome. In terms of biological role, core component of nucleosome. Nucleosomes wrap and compact DNA into chromatin, limiting DNA accessibility to the cellular machineries which require DNA as a template. Histones thereby play a central role in transcription regulation, DNA repair, DNA replication and chromosomal stability. DNA accessibility is regulated via a complex set of post-translational modifications of histones, also called histone code, and nucleosome remodeling. The sequence is that of Histone H2B.1 from Lilium longiflorum (Trumpet lily).